We begin with the raw amino-acid sequence, 902 residues long: MPFAEKKRRTYENAVKPLRKSRIYAPFRSIGHVSNAVPFDIEARGTHFLVTTSVGNTFQTYDCEKLNLLFVGKQLDKEITCLKSFKDFMLVAAGSKIFAYKRGKIIWDIDVEQEHGTVTHLDAFGEWIIACTSSRHVYVWKHASKYSVPELHTTFLPNTNADITSLLHPSTYLNKILLGFSDGALQIWNLRVSKRVHEFQEFFGDGITSLTQAPVLDVLAVGTISGRIVIFNLKNGSILMEFKQDGQVLSCSFRTDGTPILASSNPIGDLSFWDLSKRRIQNVTYNAHFGSLPKIQFLNGQPILVTAGPDNSLKEWIFDSMDGAPRILRSRNGHYEPPSFVKFYGKSVHFLISAATDRSLRAVSLYQDSQSTELSQGSVISKAKKLNVRPEELKLPEITALSSSNTREKYWDNVLTAHKNDSSARTWNWKSKTLGQHVLPTSDGTSVRSVCVSCCGNFGLIGSSKGVVDVYNMQSGIKRKSFGQSSLSGKPVTAVMLDNVNRILVTASLDGILKFWDFNKGNLIDSLDVGSSITHAIYQHSSDLVAVACDDFGIRIVDVQTRKIVRELWGHSNRLTSFDFSDTGRWLVTASLDGTIRTWDLPTGHLIDSISTPSVCTSLTFAPTGDYLATTHVDQVGISLWTNLSMFKHVSTKALRLDDVVEVSAPSVSGEKGISVVEAALNVESNAEDEEDISYRTMDQLDPNLQTLSKLPRTQWQTLINLEAIKARNAPKEVPKVPEKAPFFLPSLKDQSEATVPKQPIATEISKPTAVASIKVSGTEFSTLLHGNDDDAFFEYLKSLGPAKIDLEIRSLDAYPPYEEFILFINIMTRRLSKRRDFELVQACMSVFTKSHEDVLLMHDTPEDTVPVFESLKAWESVHKEENQRLLDLVGYCSGILSFMRT.

WD repeat units follow at residues 40–71 (DIEARGTHFLVTTSVGNTFQTYDCEKLNLLFV), 80–110 (TCLKSFKDFMLVAAGSKIFAYKRGKIIWDID), 119–154 (THLDAFGEWIIACTSSRHVYVWKHASKYSVPELHTT), 164–198 (TSLLHPSTYLNKILLGFSDGALQIWNLRVSKRVHE), 206–243 (GITSLTQAPVLDVLAVGTISGRIVIFNLKNGSILMEFK), 249–284 (LSCSFRTDGTPILASSNPIGDLSFWDLSKRRIQNVT), 289–332 (FGSL…RSRN), 339–373 (SFVKFYGKSVHFLISAATDRSLRAVSLYQDSQSTE), 399–438 (TALSSSNTREKYWDNVLTAHKNDSSARTWNWKSKTLGQHV), 447–481 (VRSVCVSCCGNFGLIGSSKGVVDVYNMQSGIKRKS), 492–528 (VTAVMLDNVNRILVTASLDGILKFWDFNKGNLIDSLD), 533–568 (ITHAIYQHSSDLVAVACDDFGIRIVDVQTRKIVREL), 570–611 (GHSN…DSIS), and 613–651 (PSVCTSLTFAPTGDYLATTHVDQVGISLWTNLSMFKHVS).

In terms of assembly, interacts with snoRNA U3. Interacts with MPP10. Component of the ribosomal small subunit (SSU) processome composed of at least 40 protein subunits and snoRNA U3.

Its subcellular location is the nucleus. The protein resides in the nucleolus. In terms of biological role, involved in nucleolar processing of pre-18S ribosomal RNA and ribosome assembly. This Schizosaccharomyces pombe (strain 972 / ATCC 24843) (Fission yeast) protein is U3 small nucleolar RNA-associated protein 21 homolog.